We begin with the raw amino-acid sequence, 538 residues long: Ribosome-associated complex subunit SSZ1 (538 aa).

The interval 400-538 is peptide-binding domain; sequence PVIVNTPHLK…KTGNAVKGEL (139 aa). The interval 464–484 is disordered; that stretch reads PIPKEENAEEDDESEWSDDEP. The span at 470–484 shows a compositional bias: acidic residues; the sequence is NAEEDDESEWSDDEP. A phosphoserine mark is found at S477 and S480.

Belongs to the heat shock protein 70 family. RAC is a heterodimer of the Hsp70/DnaK-type chaperone SSZ1 and the Hsp40/DnaJ-type chaperone ZUO1. RAC associates with ribosomes via ZUO1.

The protein resides in the cytoplasm. Component of the ribosome-associated complex (RAC), a heterodimeric chaperone complex involved in regulation of accurate translation termination and in folding or maintaining nascent polypeptides in a folding-competent state. RAC stimulates the ATPase activity of the ribosome-associated pool of Hsp70-type chaperones SSB1/SSB2 that bind to the nascent polypeptide chain. SSZ1 is required for ZUO1 to function efficiently as a J-protein for SSB1/SSB2. Also involved in pleiotropic drug resistance by post-translational activation of transcription factor PDR1. In Saccharomyces cerevisiae (strain ATCC 204508 / S288c) (Baker's yeast), this protein is Ribosome-associated complex subunit SSZ1 (SSZ1).